A 366-amino-acid chain; its full sequence is C-X-C chemokine receptor type 3 (366 aa).

Residues 1–55 (MVPEMSERQEFQASEFAYLLENSSYDYGENETYFCCTSPPCPQDFSLNFDRTFLP) lie on the Extracellular side of the membrane. Asparagine 22 carries an N-linked (GlcNAc...) asparagine glycan. Sulfotyrosine is present on residues tyrosine 25 and tyrosine 27. Asparagine 30 is a glycosylation site (N-linked (GlcNAc...) asparagine). A helical transmembrane segment spans residues 56–76 (VLYSLLFVLGLLGNGVVAVVL). Residues 77–88 (LSQRAALSSTDT) lie on the Cytoplasmic side of the membrane. The helical transmembrane segment at 89–109 (FLLHLAVADALLVLTLPLWAV) threads the bilayer. The Extracellular segment spans residues 110-124 (DAAIQWVFGSGLCKV). A disulfide bridge connects residues cysteine 122 and cysteine 201. A helical transmembrane segment spans residues 125–145 (AGALFNINFYAGALLLACISF). Over 146–167 (DRYLSIVHATQFYRRGPPARVA) the chain is Cytoplasmic. A helical membrane pass occupies residues 168-188 (LTCVAVWGLCLLFALPDFIFL). Residues 189–221 (SSHHDNRLNATHCQYNFPQEGRTALRVLQLVAG) lie on the Extracellular side of the membrane. N-linked (GlcNAc...) asparagine glycosylation occurs at asparagine 197. Residues 222-242 (FLLPLLVMAYCYARILTVLLV) form a helical membrane-spanning segment. Topologically, residues 243 to 254 (SRGQRRLRAMRL) are cytoplasmic. Residues 255–275 (VVVVVVAFALCWTPYHLVVLV) form a helical membrane-spanning segment. Topologically, residues 276 to 299 (DTLMDLGALARNCGRESRVDVAKS) are extracellular. The chain crosses the membrane as a helical span at residues 300–320 (VTSGMGYMHCCLNPLLYAFVG). Residues 321 to 366 (VKFRERMWVLLMRLGCPDQRGHQRQPSASRRDSSWSETTEASYSGL) lie on the Cytoplasmic side of the membrane. A disordered region spans residues 339–366 (QRGHQRQPSASRRDSSWSETTEASYSGL). Over residues 355–366 (WSETTEASYSGL) the composition is skewed to polar residues.

It belongs to the G-protein coupled receptor 1 family. As to quaternary structure, homomer. Forms heteromers with ACKR4. Interacts with PF4/CXCL4. In terms of processing, sulfation on Tyr-25 and Tyr-27 is essential for CXCL10 binding. Post-translationally, N-glycosylated.

The protein localises to the cell membrane. Its function is as follows. Receptor for the C-X-C chemokine CXCL9, CXCL10 and CXCL11 and mediates the proliferation, survival and angiogenic activity of mesangial cells through a heterotrimeric G-protein signaling pathway. Probably promotes cell chemotaxis response. Binds to CCL21. Upon activation by PF4, induces activated T-lymphocytes migration mediated via downstream Ras/extracellular signal-regulated kinase (ERK) signaling. The sequence is that of C-X-C chemokine receptor type 3 (CXCR3) from Capra hircus (Goat).